The chain runs to 209 residues: 8-oxoguanine DNA glycosylase/AP lyase (209 aa).

Catalysis depends on residues Lys-131 and Asp-149.

Belongs to the type-2 OGG1 family.

It catalyses the reaction 2'-deoxyribonucleotide-(2'-deoxyribose 5'-phosphate)-2'-deoxyribonucleotide-DNA = a 3'-end 2'-deoxyribonucleotide-(2,3-dehydro-2,3-deoxyribose 5'-phosphate)-DNA + a 5'-end 5'-phospho-2'-deoxyribonucleoside-DNA + H(+). Its function is as follows. Catalyzes the excision of an oxidatively damaged form of guanine (7,8-dihydro-8-oxoguanine = 8-oxoG) from DNA. Also cleaves the DNA backbone at apurinic/apyrimidinic sites (AP sites). The protein is 8-oxoguanine DNA glycosylase/AP lyase of Korarchaeum cryptofilum (strain OPF8).